The sequence spans 82 residues: Putative Fe(2+) transport protein A (82 aa).

This sequence belongs to the FeoA family.

Functionally, might be involved in Fe(2+) ion uptake. This chain is Putative Fe(2+) transport protein A, found in Methanocaldococcus jannaschii (strain ATCC 43067 / DSM 2661 / JAL-1 / JCM 10045 / NBRC 100440) (Methanococcus jannaschii).